Here is a 360-residue protein sequence, read N- to C-terminus: MLVYLAEYLTQFYTGFNVFSYVTFRAILALLTALMFSLWWGPKLIERLQVLQIGQVVRNDGPESHFSKRGTPTMGGLLILAGIFIGVLLWGDLGSRYVWVMLFVLGSFGLIGFIDDYRKVVRKDPKGLIARWKYIFQSLAALVVAFYLFYSTKHPGETQLVVPFFKDILPQLGLMFIVLTYFTIVGASNAVNLTDGLDGLAIMPTVMVAAAFALIAYLSGHVQFANYLHIPYLPGSGELVIVCTAIVGAGLGFLWFNTYPAQVFMGDVGSLSLGAALGTIAVLVRQEILLVIMGGVFVMETLSVILQVGSYKLRGQRIFRMAPIHHHYELKGWPEPRVIVRFWIISLFLVLLGLATLKLR.

The next 10 membrane-spanning stretches (helical) occupy residues 26 to 46 (AILA…KLIE), 74 to 94 (MGGL…GDLG), 97 to 117 (YVWV…IDDY), 132 to 152 (WKYI…FYST), 168 to 188 (ILPQ…VGAS), 199 to 219 (GLAI…AYLS), 236 to 256 (SGEL…FLWF), 263 to 283 (VFMG…IAVL), 288 to 308 (ILLV…ILQV), and 338 to 358 (VIVR…ATLK).

The protein belongs to the glycosyltransferase 4 family. MraY subfamily. The cofactor is Mg(2+).

The protein localises to the cell inner membrane. It catalyses the reaction UDP-N-acetyl-alpha-D-muramoyl-L-alanyl-gamma-D-glutamyl-meso-2,6-diaminopimeloyl-D-alanyl-D-alanine + di-trans,octa-cis-undecaprenyl phosphate = di-trans,octa-cis-undecaprenyl diphospho-N-acetyl-alpha-D-muramoyl-L-alanyl-D-glutamyl-meso-2,6-diaminopimeloyl-D-alanyl-D-alanine + UMP. It functions in the pathway cell wall biogenesis; peptidoglycan biosynthesis. Catalyzes the initial step of the lipid cycle reactions in the biosynthesis of the cell wall peptidoglycan: transfers peptidoglycan precursor phospho-MurNAc-pentapeptide from UDP-MurNAc-pentapeptide onto the lipid carrier undecaprenyl phosphate, yielding undecaprenyl-pyrophosphoryl-MurNAc-pentapeptide, known as lipid I. This chain is Phospho-N-acetylmuramoyl-pentapeptide-transferase, found in Shewanella amazonensis (strain ATCC BAA-1098 / SB2B).